We begin with the raw amino-acid sequence, 473 residues long: Protein nucleotidyltransferase YdiU (473 aa).

8 residues coordinate ATP: glycine 79, glycine 81, arginine 82, lysine 102, aspartate 114, glycine 115, arginine 165, and arginine 172. The active-site Proton acceptor is aspartate 241. Mg(2+)-binding residues include asparagine 242 and aspartate 251. Aspartate 251 serves as a coordination point for ATP.

The protein belongs to the SELO family. Mg(2+) is required as a cofactor. Requires Mn(2+) as cofactor.

The enzyme catalyses L-seryl-[protein] + ATP = 3-O-(5'-adenylyl)-L-seryl-[protein] + diphosphate. The catalysed reaction is L-threonyl-[protein] + ATP = 3-O-(5'-adenylyl)-L-threonyl-[protein] + diphosphate. It carries out the reaction L-tyrosyl-[protein] + ATP = O-(5'-adenylyl)-L-tyrosyl-[protein] + diphosphate. It catalyses the reaction L-histidyl-[protein] + UTP = N(tele)-(5'-uridylyl)-L-histidyl-[protein] + diphosphate. The enzyme catalyses L-seryl-[protein] + UTP = O-(5'-uridylyl)-L-seryl-[protein] + diphosphate. The catalysed reaction is L-tyrosyl-[protein] + UTP = O-(5'-uridylyl)-L-tyrosyl-[protein] + diphosphate. In terms of biological role, nucleotidyltransferase involved in the post-translational modification of proteins. It can catalyze the addition of adenosine monophosphate (AMP) or uridine monophosphate (UMP) to a protein, resulting in modifications known as AMPylation and UMPylation. The polypeptide is Protein nucleotidyltransferase YdiU (Marinomonas sp. (strain MWYL1)).